Here is a 513-residue protein sequence, read N- to C-terminus: ATP synthase subunit alpha (513 aa).

Gly169 to Thr176 provides a ligand contact to ATP.

This sequence belongs to the ATPase alpha/beta chains family. As to quaternary structure, F-type ATPases have 2 components, CF(1) - the catalytic core - and CF(0) - the membrane proton channel. CF(1) has five subunits: alpha(3), beta(3), gamma(1), delta(1), epsilon(1). CF(0) has three main subunits: a(1), b(2) and c(9-12). The alpha and beta chains form an alternating ring which encloses part of the gamma chain. CF(1) is attached to CF(0) by a central stalk formed by the gamma and epsilon chains, while a peripheral stalk is formed by the delta and b chains.

The protein localises to the cell inner membrane. It carries out the reaction ATP + H2O + 4 H(+)(in) = ADP + phosphate + 5 H(+)(out). Its function is as follows. Produces ATP from ADP in the presence of a proton gradient across the membrane. The alpha chain is a regulatory subunit. This chain is ATP synthase subunit alpha, found in Aeromonas hydrophila subsp. hydrophila (strain ATCC 7966 / DSM 30187 / BCRC 13018 / CCUG 14551 / JCM 1027 / KCTC 2358 / NCIMB 9240 / NCTC 8049).